The following is a 566-amino-acid chain: Chondroitin sulfate proteoglycan 5 (566 aa).

An N-terminal signal peptide occupies residues 1–30; that stretch reads MGRAGGGGPDWGPPPVLLLLGVTLVLTAGA. The Extracellular segment spans residues 31–423; the sequence is VPARETGSAI…SIITDFQVMC (393 aa). O-linked (Xyl...) (chondroitin sulfate) serine glycosylation is present at Ser-38. Residues 56-93 are disordered; it reads ANDTREEAGLPAAGEDETSWTERGSEMAAVGPGVGPEE. Asn-57 is a glycosylation site (N-linked (GlcNAc...) asparagine). The O-linked (GalNAc...) threonine glycan is linked to Thr-76. O-linked (Xyl...) (chondroitin sulfate) serine glycosylation is present at Ser-123. Thr-132 carries an O-linked (GalNAc...) threonine glycan. 3 disordered regions span residues 137–173, 218–249, and 263–327; these read DEAL…GPEL, DSEG…TPSW, and ESDF…PPQH. Ser-143 carries an O-linked (GalNAc...) serine glycan. 3 O-linked (GalNAc...) threonine glycosylation sites follow: Thr-144, Thr-153, and Thr-155. Residues Ser-156 and Ser-160 are each glycosylated (O-linked (GalNAc...) serine). Residues 163-173 are compositionally biased toward basic and acidic residues; it reads VHDKPSVGPEL. Thr-235 carries O-linked (GalNAc...) threonine glycosylation. The segment at 265–301 is interaction with TNC and TNR; that stretch reads DFYPTTSFYDDLEEEEEEEEDKDTVGGGDLEDENDLL. The span at 274-286 shows a compositional bias: acidic residues; that stretch reads DDLEEEEEEEEDK. Asn-355 and Asn-367 each carry an N-linked (GlcNAc...) asparagine glycan. Positions 371-413 constitute an EGF-like domain; it reads RSVCDLFPSYCHNGGQCYLVENIGAFCRCNTQDYIWHKGMRCE. 3 cysteine pairs are disulfide-bonded: Cys-374/Cys-387, Cys-381/Cys-397, and Cys-399/Cys-412. Residues Gly-394 and Phe-396 each carry the phosphoserine modification. Residue Cys-397 is modified to Phosphothreonine. A helical transmembrane segment spans residues 424–444; the sequence is VAVGSAALVLLLLFMMTVFFA. The interaction with GOPC stretch occupies residues 442 to 460; that stretch reads FFAKKLYLLKTENTKLRRT. Residues 445–566 lie on the Cytoplasmic side of the membrane; that stretch reads KKLYLLKTEN…GVNCLQNNLT (122 aa). Ser-467, Ser-475, and Ser-477 each carry phosphoserine. Thr-478 carries the phosphothreonine modification. A phosphoserine mark is found at Ser-483 and Ser-543. The segment at 531–566 is disordered; sequence KEEESFNIQNSMSPKLEGGKGDQDDLGVNCLQNNLT.

In terms of assembly, binds TNR and probably TNC. Interacts with ERBB3 and GOPC. Interacts with MDK; this interaction is independent of the presence of chondroitin sulfate chains and promotes elongation of oligodendroglial precursor-like cells. Post-translationally, N-glycosylated. O-glycosylated; contains chondroitin sulfate glycans. Part-time proteoglycan, expressed in part as a proteoglycan exhibiting chondroitin sulfate glycans and in part as a non-proteoglycan form. The relative amount of both forms depends on tissues and tissue maturation. In the cerebellum the 2 forms coexist while in the cerebrum the proteoglycan form is predominant. In terms of processing, phosphorylated; in intracellular and extracellular parts. As to expression, expressed in olfactory bulb, hippocampus, brain stem, spinal cord, cerebrum and cerebellum. Expressed by Purkinje cells in the cerebellum (at protein level). Expressed in immature and mature cerebellum (isoform 1, isoform 2 and isoform 3).

It localises to the cell membrane. The protein localises to the synaptic cell membrane. Its subcellular location is the endoplasmic reticulum membrane. The protein resides in the golgi apparatus membrane. It is found in the cell surface. It localises to the secreted. Its function is as follows. May function as a growth and differentiation factor involved in neuritogenesis. May induce ERBB3 activation. This Mus musculus (Mouse) protein is Chondroitin sulfate proteoglycan 5 (Cspg5).